A 576-amino-acid polypeptide reads, in one-letter code: High-affinity choline transporter 1 (576 aa).

A helical membrane pass occupies residues 6-26; sequence GIVAIVFFYVLILVVGIWAGR. The Cytoplasmic portion of the chain corresponds to 27-51; the sequence is KSKSSKELESEAGAATEEVMLAGRN. The chain crosses the membrane as a helical span at residues 52-72; sequence IGTLVGIFTMTATWVGGAYIN. The Extracellular segment spans residues 73–82; sequence GTAEALYNGG. The helical transmembrane segment at 83-103 threads the bilayer; it reads LLGCQAPVGYAISLVMGGLLF. At 104–126 the chain is on the cytoplasmic side; that stretch reads AKKMREEGYITMLDPFQHKYGQR. The chain crosses the membrane as a helical span at residues 127–147; sequence IGGLMYVPALLGETFWTAAIL. Residues 148 to 165 lie on the Extracellular side of the membrane; sequence SALGATLSVILGIDMNAS. The chain crosses the membrane as a helical span at residues 166 to 186; it reads VTLSACIAVFYTFTGGYYAVA. At 187–192 the chain is on the cytoplasmic side; it reads YTDVVQ. The helical transmembrane segment at 193–213 threads the bilayer; the sequence is LFCIFVGLWVCVPAAMVHDGA. Topologically, residues 214 to 233 are extracellular; the sequence is KDISRNAGDWIGEIGGFKET. The helical transmembrane segment at 234–254 threads the bilayer; that stretch reads SLWIDCMLLLVFGGIPWQVYF. At 255–270 the chain is on the cytoplasmic side; the sequence is QRVLSSKTAHGAQTLS. A helical transmembrane segment spans residues 271 to 291; sequence FVAGVGCILMAIPPALIGAIA. Topologically, residues 292 to 319 are extracellular; the sequence is RNTDWRMTDYSPWNNGTKVESIPPDKRN. N-linked (GlcNAc...) asparagine glycosylation occurs at Asn-306. Residues 320-340 form a helical membrane-spanning segment; the sequence is MVVPLVFQYLTPRWVAFIGLG. At 341–378 the chain is on the cytoplasmic side; the sequence is AVSAAVMSSADSSVLSAASMFAHNIWKLTIRPHASEKE. Residues 379-399 traverse the membrane as a helical segment; it reads VIIVMRIAIICVGIMATIMAL. The Extracellular portion of the chain corresponds to 400-408; it reads TIQSIYGLW. A helical transmembrane segment spans residues 409–429; that stretch reads YLCADLVYVILFPQLLCVVYM. At 430–437 the chain is on the cytoplasmic side; sequence PRSNTYGS. The helical transmembrane segment at 438–458 threads the bilayer; that stretch reads LAGYAVGLVLRLIGGEPLVSL. At 459–478 the chain is on the extracellular side; the sequence is PAFFHYPMYTDGVQYFPFRT. The helical transmembrane segment at 479-499 threads the bilayer; that stretch reads TAMLSSMATIYIVSIQSEKLF. Over 500-576 the chain is Cytoplasmic; it reads KSGRLSPEWD…DQSYYSTNSN (77 aa). The disordered stretch occupies residues 541 to 576; sequence APNGTPAPVHPNQQPSDENTLLHPYSDQSYYSTNSN. The segment covering 566–576 has biased composition (polar residues); sequence SDQSYYSTNSN.

It belongs to the sodium:solute symporter (SSF) (TC 2.A.21) family. Detected in the nervous system, including the nerve ring and cholinergic motor neurons of the ventral nerve cord.

The protein localises to the membrane. In terms of biological role, imports choline from the extracellular space to the neuron with high affinity. Choline uptake is the rate-limiting step in acetylcholine synthesis. Sodium ion and chloride ion dependent. In Caenorhabditis elegans, this protein is High-affinity choline transporter 1 (cho-1).